Consider the following 468-residue polypeptide: 3-isopropylmalate dehydratase large subunit (468 aa).

Residues C347, C407, and C410 each coordinate [4Fe-4S] cluster.

Belongs to the aconitase/IPM isomerase family. LeuC type 1 subfamily. In terms of assembly, heterodimer of LeuC and LeuD. It depends on [4Fe-4S] cluster as a cofactor.

It carries out the reaction (2R,3S)-3-isopropylmalate = (2S)-2-isopropylmalate. The protein operates within amino-acid biosynthesis; L-leucine biosynthesis; L-leucine from 3-methyl-2-oxobutanoate: step 2/4. Catalyzes the isomerization between 2-isopropylmalate and 3-isopropylmalate, via the formation of 2-isopropylmaleate. This is 3-isopropylmalate dehydratase large subunit from Synechococcus elongatus (strain ATCC 33912 / PCC 7942 / FACHB-805) (Anacystis nidulans R2).